A 67-amino-acid chain; its full sequence is Large ribosomal subunit protein bL35 (67 aa).

The protein belongs to the bacterial ribosomal protein bL35 family.

This Anaeromyxobacter sp. (strain Fw109-5) protein is Large ribosomal subunit protein bL35.